Consider the following 314-residue polypeptide: Mitochondrial thiamine pyrophosphate carrier 1 (314 aa).

Helical transmembrane passes span 14–30 (VAAW…GLLA), 84–100 (LLYV…YSLF), 116–136 (LVVG…FDVL), 170–186 (GSIA…SIMF), 217–233 (SAGT…TFPL), and 285–302 (GILV…VSFW). Solcar repeat units lie at residues 14–103 (VAAW…FNRY), 110–195 (EARL…IRIY), and 210–310 (ELAT…AIHY).

This sequence belongs to the mitochondrial carrier (TC 2.A.29) family.

It localises to the mitochondrion inner membrane. Mitochondrial transporter that mediates uptake of thiamine pyrophosphate (ThPP) into mitochondria. In Saccharomyces cerevisiae (strain ATCC 204508 / S288c) (Baker's yeast), this protein is Mitochondrial thiamine pyrophosphate carrier 1 (TPC1).